The primary structure comprises 252 residues: Protein PYRAB15930 (252 aa).

Belongs to the CinA family.

The protein is Protein PYRAB15930 of Pyrococcus abyssi (strain GE5 / Orsay).